We begin with the raw amino-acid sequence, 574 residues long: Ankyrin repeat protein B18 (574 aa).

ANK repeat units follow at residues 56–87, 135–164, 167–213, 217–249, 253–285, and 327–356; these read TGYT…DVTM, IKSR…DPNF, DGYT…NLNA, CGNT…NFKI, HGLT…NVGE, and EGKT…DINA. Residues 541-574 enclose the F-box domain; it reads NCLLTLLPSEIIYEILYMLTINDLYNISYPPTKV.

This Vaccinia virus (strain Ankara) (VACV) protein is Ankyrin repeat protein B18.